Reading from the N-terminus, the 257-residue chain is 1-(5-phosphoribosyl)-5-[(5-phosphoribosylamino)methylideneamino] imidazole-4-carboxamide isomerase (257 aa).

Asp8 (proton acceptor) is an active-site residue. Asp129 acts as the Proton donor in catalysis.

It belongs to the HisA/HisF family.

It localises to the cytoplasm. It catalyses the reaction 1-(5-phospho-beta-D-ribosyl)-5-[(5-phospho-beta-D-ribosylamino)methylideneamino]imidazole-4-carboxamide = 5-[(5-phospho-1-deoxy-D-ribulos-1-ylimino)methylamino]-1-(5-phospho-beta-D-ribosyl)imidazole-4-carboxamide. The protein operates within amino-acid biosynthesis; L-histidine biosynthesis; L-histidine from 5-phospho-alpha-D-ribose 1-diphosphate: step 4/9. The chain is 1-(5-phosphoribosyl)-5-[(5-phosphoribosylamino)methylideneamino] imidazole-4-carboxamide isomerase from Acaryochloris marina (strain MBIC 11017).